The chain runs to 98 residues: Small ribosomal subunit protein uS19c (98 aa).

It belongs to the universal ribosomal protein uS19 family.

It localises to the plastid. It is found in the chloroplast. In terms of biological role, protein S19 forms a complex with S13 that binds strongly to the 16S ribosomal RNA. The polypeptide is Small ribosomal subunit protein uS19c (Jasminum nudiflorum (Winter jasmine)).